The chain runs to 475 residues: Ras-GEF domain-containing family member 1B-B (475 aa).

Positions 1-19 are enriched in polar residues; it reads MPQTTPYSSKFNPSAYSSS. A disordered region spans residues 1–25; that stretch reads MPQTTPYSSKFNPSAYSSSHSHRQP. One can recognise an N-terminal Ras-GEF domain in the interval 36–166; sequence RDNKLVSGSL…LIQRLLRKLT (131 aa). The Ras-GEF domain maps to 209-456; the sequence is DPFIFAQQLT…QLASYESEGP (248 aa). The interval 452 to 475 is disordered; sequence ESEGPENNLERDTRRSLRSSLSRM.

Functionally, guanine nucleotide exchange factor (GEF) for Ras family proteins. The polypeptide is Ras-GEF domain-containing family member 1B-B (Danio rerio (Zebrafish)).